A 699-amino-acid polypeptide reads, in one-letter code: Telomere elongation protein EST1 (699 aa).

Residues 641 to 663 form a disordered region; that stretch reads KKLSPLPEKDGVSSELVKHAASR. Residues 647-658 show a composition bias toward basic and acidic residues; it reads PEKDGVSSELVK.

It belongs to the EST1 family. Interacts with CDC13 and MPS3.

The protein localises to the nucleus. It is found in the chromosome. Its subcellular location is the telomere. Its function is as follows. Directly involved in telomere replication. Associates with telomerase and during its interaction with CDC13, telomerase activity is promoted. In Saccharomyces cerevisiae (strain ATCC 204508 / S288c) (Baker's yeast), this protein is Telomere elongation protein EST1 (EST1).